Here is a 147-residue protein sequence, read N- to C-terminus: Small ribosomal subunit protein uS9 (147 aa).

Positions 128–147 are disordered; it reads KERKKYGQMGARAKYRWSKR.

It belongs to the universal ribosomal protein uS9 family.

This is Small ribosomal subunit protein uS9 (rpsI) from Aquifex aeolicus (strain VF5).